The primary structure comprises 320 residues: Acetaldehyde dehydrogenase 2 (320 aa).

Cys129 acts as the Acyl-thioester intermediate in catalysis. NAD(+)-binding positions include 160–168 (SAGPGTRAN) and Asn287.

The protein belongs to the acetaldehyde dehydrogenase family.

It carries out the reaction acetaldehyde + NAD(+) + CoA = acetyl-CoA + NADH + H(+). This chain is Acetaldehyde dehydrogenase 2, found in Burkholderia cenocepacia (strain ATCC BAA-245 / DSM 16553 / LMG 16656 / NCTC 13227 / J2315 / CF5610) (Burkholderia cepacia (strain J2315)).